The primary structure comprises 935 residues: Intimin (935 aa).

The signal sequence occupies residues 1 to 41 (MITHGFYARTRHKHKLKKTFIMLSAGLGLFFYVNQNSFANG). The peptidoglycan-binding stretch occupies residues 40–153 (NGENYFKLSS…KMTKMSPDAT (114 aa)). Residues 40 to 153 (NGENYFKLSS…KMTKMSPDAT (114 aa)) form a sufficient for homodimerization region. The segment at 40–212 (NGENYFKLSS…LQAWLQHYGT (173 aa)) is required for periplasmic localization. The LysM domain maps to 63–112 (LFYTLKTGETVSSISKSQGISLSVIWSLNKHLYSSESEMLKAAPGQQIIL). An inverse autotransporter region spans residues 210–411 (YGTAEVNLQS…LYSMQFRYQF (202 aa)). The interval 402–411 (LYSMQFRYQF) is signature sequence for beta-barrel assembly machinery (BAM), which recognizes the unfolded beta-barrel in the periplasm. 2 consecutive Big-1 domains span residues 560-653 (VTDF…VIFV) and 660-754 (ITEI…VTFF). The BIG2 domain occupies 790-834 (GGNGTYSWHSENTNIATVDESGKVTLKGKGTAVINVTSGDKQTVS). A disulfide bond links Cys-859 and Cys-933.

It belongs to the intimin/invasin family. Homodimer. Interacts with Tir.

It localises to the cell outer membrane. Functionally, an inverse autotransporter. Adhesin, which mediates attachment to the human intestine epithelial cells. Necessary for the production of attaching and effacing lesions on infected human tissue culture cells. Anchored to the outer membrane by binding to peptidoglycan (PGN) via its periplasmic domain, thus helping in receptor interactions during host invasion. PGN-binding may also aid in resisting mechanical and chemical stress during transit of the bacterium through the gastrointestinal tract of the host. The sequence is that of Intimin (eae) from Escherichia coli O111:H-.